An 899-amino-acid chain; its full sequence is Alanine--tRNA ligase, chloroplastic/mitochondrial (899 aa).

Positions 581, 585, 683, and 687 each coordinate Zn(2+).

This sequence belongs to the class-II aminoacyl-tRNA synthetase family. As to quaternary structure, monomer. Zn(2+) is required as a cofactor.

It localises to the plastid. The protein localises to the chloroplast. The protein resides in the mitochondrion. It catalyses the reaction tRNA(Ala) + L-alanine + ATP = L-alanyl-tRNA(Ala) + AMP + diphosphate. Catalyzes the attachment of alanine to tRNA(Ala) in a two-step reaction: alanine is first activated by ATP to form Ala-AMP and then transferred to the acceptor end of tRNA(Ala). Also edits incorrectly charged tRNA(Ala) via its editing domain. In Micromonas pusilla (strain CCMP1545) (Picoplanktonic green alga), this protein is Alanine--tRNA ligase, chloroplastic/mitochondrial.